A 463-amino-acid polypeptide reads, in one-letter code: Nitrate/nitrite antiporter NarK (463 aa).

Topologically, residues 1–37 (MSHSSAPERATGAVITDWRPEDPAFWQQRGQRIASRN) are cytoplasmic. Residues 38-59 (LWISVPCLLLAFCVWMLFSAVA) form a helical membrane-spanning segment. Residues 60–73 (VNLPKVGFNFTTDQ) are Periplasmic-facing. A helical membrane pass occupies residues 74 to 95 (LFMLTALPSVSGALLRVPYSFM). Residue Arg-89 participates in nitrate binding. Arg-89 serves as a coordination point for nitrite. At 96–102 (VPIFGGR) the chain is on the cytoplasmic side. The helical transmembrane segment at 103-122 (RWTAFSTGILIIPCVWLGFA) threads the bilayer. Over 123 to 130 (VQDTSTPY) the chain is Periplasmic. The helical transmembrane segment at 131 to 151 (SVFIIISLLCGFAGANFASSM) threads the bilayer. At 152–166 (ANISFFFPKQKQGGA) the chain is on the cytoplasmic side. Residues 167–189 (LGLNGGLGNMGVSVMQLVAPLVV) traverse the membrane as a helical segment. Asn-175 provides a ligand contact to nitrate. Residues 190-211 (SLSIFAVFGSQGVKQPDGTELY) lie on the Periplasmic side of the membrane. The helical transmembrane segment at 212-233 (LANASWIWVPFLAIFTIAAWFG) threads the bilayer. Over 234–253 (MNDLATSKASIKEQLPVLKR) the chain is Cytoplasmic. A helical membrane pass occupies residues 254 to 281 (GHLWIMSLLYLATFGSFIGFSAGFAMLS). Tyr-263 is a nitrate binding site. Nitrite is bound at residue Tyr-263. The Periplasmic portion of the chain corresponds to 282-289 (KTQFPDVQ). A helical transmembrane segment spans residues 290-312 (ILQYAFFGPFIGALARSAGGALS). Topologically, residues 313-316 (DRLG) are cytoplasmic. Residues 317–338 (GTRVTLVNFILMAIFSGLLFLT) form a helical membrane-spanning segment. Residues 339 to 347 (LPTDGQGGS) are Periplasmic-facing. Residues 348-373 (FMAFFAVFLALFLTAGLGSGSTFQMI) traverse the membrane as a helical segment. Residues 374–405 (SVIFRKLTMDRVKAEGGSDERAMREAATDTAA) are Cytoplasmic-facing. Residues 406-427 (ALGFISAIGAIGGFFIPKAFGS) form a helical membrane-spanning segment. Nitrate is bound at residue Ser-411. Over 428 to 435 (SLALTGSP) the chain is Periplasmic. Residues 436–458 (VGAMKVFLIFYIACVVITWAVYG) form a helical membrane-spanning segment. Topologically, residues 459–463 (RHSKK) are cytoplasmic.

It belongs to the major facilitator superfamily. Nitrate/nitrite porter (TC 2.A.1.8) family.

It is found in the cell inner membrane. The catalysed reaction is nitrate(in) + nitrite(out) = nitrate(out) + nitrite(in). Functionally, catalyzes nitrate uptake, nitrite uptake and nitrite export across the cytoplasmic membrane. Functions as a nitrate/nitrite exchanger, and protons are unlikely to be co-transported. This is Nitrate/nitrite antiporter NarK from Escherichia coli (strain K12).